The chain runs to 403 residues: Phosphopentomutase (403 aa).

Asp-13, Asp-298, His-303, Asp-339, His-340, and His-351 together coordinate Mn(2+).

The protein belongs to the phosphopentomutase family. The cofactor is Mn(2+).

It is found in the cytoplasm. The enzyme catalyses 2-deoxy-alpha-D-ribose 1-phosphate = 2-deoxy-D-ribose 5-phosphate. It carries out the reaction alpha-D-ribose 1-phosphate = D-ribose 5-phosphate. The protein operates within carbohydrate degradation; 2-deoxy-D-ribose 1-phosphate degradation; D-glyceraldehyde 3-phosphate and acetaldehyde from 2-deoxy-alpha-D-ribose 1-phosphate: step 1/2. Its function is as follows. Isomerase that catalyzes the conversion of deoxy-ribose 1-phosphate (dRib-1-P) and ribose 1-phosphate (Rib-1-P) to deoxy-ribose 5-phosphate (dRib-5-P) and ribose 5-phosphate (Rib-5-P), respectively. The chain is Phosphopentomutase from Streptococcus gordonii (strain Challis / ATCC 35105 / BCRC 15272 / CH1 / DL1 / V288).